Consider the following 281-residue polypeptide: Phosphatidylserine decarboxylase proenzyme (281 aa).

Residues D90, H143, and S248 each act as charge relay system; for autoendoproteolytic cleavage activity in the active site. The active-site Schiff-base intermediate with substrate; via pyruvic acid; for decarboxylase activity is S248. S248 is modified (pyruvic acid (Ser); by autocatalysis).

Belongs to the phosphatidylserine decarboxylase family. PSD-B subfamily. Prokaryotic type I sub-subfamily. In terms of assembly, heterodimer of a large membrane-associated beta subunit and a small pyruvoyl-containing alpha subunit. Pyruvate is required as a cofactor. Post-translationally, is synthesized initially as an inactive proenzyme. Formation of the active enzyme involves a self-maturation process in which the active site pyruvoyl group is generated from an internal serine residue via an autocatalytic post-translational modification. Two non-identical subunits are generated from the proenzyme in this reaction, and the pyruvate is formed at the N-terminus of the alpha chain, which is derived from the carboxyl end of the proenzyme. The autoendoproteolytic cleavage occurs by a canonical serine protease mechanism, in which the side chain hydroxyl group of the serine supplies its oxygen atom to form the C-terminus of the beta chain, while the remainder of the serine residue undergoes an oxidative deamination to produce ammonia and the pyruvoyl prosthetic group on the alpha chain. During this reaction, the Ser that is part of the protease active site of the proenzyme becomes the pyruvoyl prosthetic group, which constitutes an essential element of the active site of the mature decarboxylase.

The protein localises to the cell membrane. It carries out the reaction a 1,2-diacyl-sn-glycero-3-phospho-L-serine + H(+) = a 1,2-diacyl-sn-glycero-3-phosphoethanolamine + CO2. It functions in the pathway phospholipid metabolism; phosphatidylethanolamine biosynthesis; phosphatidylethanolamine from CDP-diacylglycerol: step 2/2. Functionally, catalyzes the formation of phosphatidylethanolamine (PtdEtn) from phosphatidylserine (PtdSer). This Francisella philomiragia subsp. philomiragia (strain ATCC 25017 / CCUG 19701 / FSC 153 / O#319-036) protein is Phosphatidylserine decarboxylase proenzyme.